The sequence spans 100 residues: Cystatin-B (100 aa).

The Cystatin domain occupies 6 to 88 (GGISAPLDAD…GGGLELSGMQ (83 aa)). Positions 48–52 (QIVSG) match the Secondary area of contact motif.

This sequence belongs to the cystatin family. As to expression, widely expressed. Highly expressed in liver and to a lesser extent in spleen, gill, brain, intestine, kidney, head kidney and blood. Lowest level in muscle.

It is found in the cytoplasm. In terms of biological role, thiol protease inhibitor. Has papain inhibitory activity in vitro. May be involved in immune responses against invading Gram-negative bacteria. In Oplegnathus fasciatus (Barred knifejaw), this protein is Cystatin-B.